We begin with the raw amino-acid sequence, 413 residues long: Na(+)-translocating NADH-quinone reductase subunit B (413 aa).

3 consecutive transmembrane segments (helical) span residues 56-76 (MMIL…YNVG), 123-143 (LLGA…GGFW), and 169-189 (IVPP…GVVI). At threonine 236 the chain carries FMN phosphoryl threonine. 5 consecutive transmembrane segments (helical) span residues 270–290 (GSIG…IIFG), 297–317 (IVAG…WIGS), 322–342 (LFAM…GMIF), 358–378 (WWYG…NPAY), and 381–401 (GMML…YVVV).

This sequence belongs to the NqrB/RnfD family. Composed of six subunits; NqrA, NqrB, NqrC, NqrD, NqrE and NqrF. FMN serves as cofactor.

The protein localises to the cell inner membrane. The catalysed reaction is a ubiquinone + n Na(+)(in) + NADH + H(+) = a ubiquinol + n Na(+)(out) + NAD(+). In terms of biological role, NQR complex catalyzes the reduction of ubiquinone-1 to ubiquinol by two successive reactions, coupled with the transport of Na(+) ions from the cytoplasm to the periplasm. NqrA to NqrE are probably involved in the second step, the conversion of ubisemiquinone to ubiquinol. This chain is Na(+)-translocating NADH-quinone reductase subunit B, found in Yersinia pestis.